The primary structure comprises 404 residues: MQLKAFSVSEVTEYIKKVMDNDIILRNVRVRGEISNLKYHSTAVYFTLKDEGAALKCVMFNDYSRSLEFTLQDGMSVIATGRITVYEKGGLYQLYVQSVQMDGIGALYIAFNKLKEKLQKEGLFDLDKKKPIPKHPRKIAVVTSPTGAVIRDIITISRRRNPTVDIMVVPVLVQGSSAADEISNALRILNKRKDIDVIIVARGGGSLEEIWPFNEEKVARSIFASRIPVVSAVGHETDFTIADFVADLRAPTPSAAAELVVPDIKVYQRELFLLKTKIMNLMKAQVLHSKKEFEGLKRALYLNNPIKKNEVLKQRVKNLKKSLTKEMLSIFNQKKNELLVLNEKLDSLSPLKVLTRGYTIVLNKEGQVITSSRKVKTSEEVGILFSDGRATAVVKEVKEDGERI.

Belongs to the XseA family. As to quaternary structure, heterooligomer composed of large and small subunits.

The protein resides in the cytoplasm. It carries out the reaction Exonucleolytic cleavage in either 5'- to 3'- or 3'- to 5'-direction to yield nucleoside 5'-phosphates.. In terms of biological role, bidirectionally degrades single-stranded DNA into large acid-insoluble oligonucleotides, which are then degraded further into small acid-soluble oligonucleotides. The sequence is that of Exodeoxyribonuclease 7 large subunit from Caldanaerobacter subterraneus subsp. tengcongensis (strain DSM 15242 / JCM 11007 / NBRC 100824 / MB4) (Thermoanaerobacter tengcongensis).